The primary structure comprises 332 residues: Putative symporter YfeH (332 aa).

The protein belongs to the bile acid:sodium symporter (BASS) (TC 2.A.28) family.

The polypeptide is Putative symporter YfeH (yfeH) (Escherichia coli (strain K12)).